Here is a 223-residue protein sequence, read N- to C-terminus: Type III pantothenate kinase (223 aa).

17–24 is an ATP binding site; that stretch reads DIGNTRIH. Residues Tyr-81 and 85–88 contribute to the substrate site; that span reads GIDR. Asp-87 (proton acceptor) is an active-site residue. Asp-102 lines the K(+) pocket. Ser-105 is an ATP binding site. Thr-157 contributes to the substrate binding site.

This sequence belongs to the type III pantothenate kinase family. In terms of assembly, homodimer. NH4(+) is required as a cofactor. Requires K(+) as cofactor.

It localises to the cytoplasm. The enzyme catalyses (R)-pantothenate + ATP = (R)-4'-phosphopantothenate + ADP + H(+). The protein operates within cofactor biosynthesis; coenzyme A biosynthesis; CoA from (R)-pantothenate: step 1/5. Its function is as follows. Catalyzes the phosphorylation of pantothenate (Pan), the first step in CoA biosynthesis. The chain is Type III pantothenate kinase from Helicobacter pylori (strain J99 / ATCC 700824) (Campylobacter pylori J99).